Reading from the N-terminus, the 69-residue chain is Guanine nucleotide-binding protein G(I)/G(S)/G(O) subunit gamma-T2 (69 aa).

Cysteine methyl ester is present on C66. A lipid anchor (S-farnesyl cysteine) is attached at C66. A propeptide spans 67-69 (IIS) (removed in mature form).

It belongs to the G protein gamma family. G proteins are composed of 3 units, alpha, beta and gamma.

The protein localises to the cell membrane. In terms of biological role, guanine nucleotide-binding proteins (G proteins) are involved as a modulator or transducer in various transmembrane signaling systems. The beta and gamma chains are required for the GTPase activity, for replacement of GDP by GTP, and for G protein-effector interaction. The protein is Guanine nucleotide-binding protein G(I)/G(S)/G(O) subunit gamma-T2 (GNGT2) of Bos taurus (Bovine).